The sequence spans 638 residues: MAPKPPSGTSSRAWDAVNPPLSEWVLDAVSSMGFTRMTPVQASAIPLFMAHKDVVVEAVTGSGKTLSFLIPVVEKLLRLEEPIKKHHVGAIIVSPTRELASQIYNVLTSLLAFHPASAAVINTSETEDVPRPKHSSSVLRVVPQLLLGGSTSPAEDLSTFLKRSPNLLVATPGRLLELLSSPHVYCPQSSFEMLVLDEADRLLDLGFKETLQNILRRLPKQRRTGLFSASVSEAVDQIVRVGLRNPVKVVVKVKGASGVDDKRTPASLQMTYLTQPPTGKFPALKHILNSVQPTPSKSIFFVSTCSGVDYLSVILPLILGNDFQLIPLHGKHPANVRQKNFNRFVNAHNPAILLTTDVASRGLDIPSVDLVVQIDPPSDPKTFIHRCGRAGRAGRRGLSVVLLHPGREEDYVSFLEVRKTPVAPFPHPITVSDAEAAAATETARKVVKADRAIHDRGQKAFVSWLRSYSKHQASSIFRVADLDWEGLGKAWGLLKLPKMPELKNFKGDKTLGVQMDWDTYAYKDKQREKRRLELLQEMAESGQQQTTNKKRPNETVAWSNNAENRNKKAKRRDMKQVRQERKRWEKMTEEEKKKALETEQMLEQIRAKNEEQRRLKRAAAKADKDAEEGGDEEFTGFD.

Residues 14–42 (WDAVNPPLSEWVLDAVSSMGFTRMTPVQA) carry the Q motif motif. The Helicase ATP-binding domain maps to 45 to 249 (IPLFMAHKDV…RVGLRNPVKV (205 aa)). 58-65 (AVTGSGKT) contributes to the ATP binding site. Residues 197–200 (DEAD) carry the DEAD box motif. The region spanning 283-437 (ALKHILNSVQ…PITVSDAEAA (155 aa)) is the Helicase C-terminal domain. Residues 521-629 (AYKDKQREKR…AKADKDAEEG (109 aa)) are a coiled coil. A disordered region spans residues 538–638 (MAESGQQQTT…GGDEEFTGFD (101 aa)). The segment covering 574–597 (MKQVRQERKRWEKMTEEEKKKALE) has biased composition (basic and acidic residues). The segment covering 625–638 (DAEEGGDEEFTGFD) has biased composition (acidic residues).

Belongs to the DEAD box helicase family. DDX55/SPB4 subfamily. In terms of assembly, component of pre-60S ribosomal complexes.

It localises to the nucleus. It is found in the nucleolus. The enzyme catalyses ATP + H2O = ADP + phosphate + H(+). Functionally, ATP-binding RNA helicase involved in the biogenesis of 60S ribosomal subunits. Binds 90S pre-ribosomal particles and dissociates from pre-60S ribosomal particles after processing of 27SB pre-rRNA. Required for the normal formation of 18S rRNA through the processing of pre-rRNAs at sites A0, A1 and A2, and the normal formation of 25S and 5.8S rRNAs through the processing of pre-rRNAs at sites C1 and C2. The protein is ATP-dependent rRNA helicase spb4 of Emericella nidulans (strain FGSC A4 / ATCC 38163 / CBS 112.46 / NRRL 194 / M139) (Aspergillus nidulans).